Consider the following 911-residue polypeptide: Valine--tRNA ligase (911 aa).

A 'HIGH' region motif is present at residues 57–67 (PTVSGSLHVGH). Positions 599–603 (KMSKS) match the 'KMSKS' region motif. Lys602 lines the ATP pocket. The interval 882–911 (EESAAEDAPETEVAVEASELGEPPVKKPKH) is disordered.

The protein belongs to the class-I aminoacyl-tRNA synthetase family. ValS type 2 subfamily. As to quaternary structure, monomer.

Its subcellular location is the cytoplasm. The enzyme catalyses tRNA(Val) + L-valine + ATP = L-valyl-tRNA(Val) + AMP + diphosphate. Catalyzes the attachment of valine to tRNA(Val). As ValRS can inadvertently accommodate and process structurally similar amino acids such as threonine, to avoid such errors, it has a 'posttransfer' editing activity that hydrolyzes mischarged Thr-tRNA(Val) in a tRNA-dependent manner. The sequence is that of Valine--tRNA ligase from Bifidobacterium longum subsp. infantis (strain ATCC 15697 / DSM 20088 / JCM 1222 / NCTC 11817 / S12).